We begin with the raw amino-acid sequence, 361 residues long: Deoxyhypusine hydroxylase (361 aa).

HEAT-like PBS-type repeat units lie at residues 59–85 (LKHE…VLEN), 94–120 (VRHE…YMQD), 183–211 (QRYR…GFRD), and 216–242 (FRHE…RLRD). Residues His61, Glu62, His96, and Glu97 each coordinate Fe cation. The Fe cation site is built by His218, Glu219, His251, and Glu252.

It belongs to the deoxyhypusine hydroxylase family. Fe(2+) serves as cofactor.

It is found in the cytoplasm. Its subcellular location is the nucleus. It catalyses the reaction [eIF5A protein]-deoxyhypusine + AH2 + O2 = [eIF5A protein]-hypusine + A + H2O. It functions in the pathway protein modification; eIF5A hypusination. Functionally, catalyzes the hydroxylation of the N(6)-(4-aminobutyl)-L-lysine intermediate to form hypusine, an essential post-translational modification only found in mature eIF-5A factor. This Cryptococcus neoformans var. neoformans serotype D (strain B-3501A) (Filobasidiella neoformans) protein is Deoxyhypusine hydroxylase.